Reading from the N-terminus, the 127-residue chain is Modulator protein MzrA (127 aa).

At 1-9 the chain is on the cytoplasmic side; sequence MQLPRVTLR. A helical membrane pass occupies residues 10 to 32; the sequence is QMTWTTSAIVLLGITLLLWSAFR. Over 33-127 the chain is Periplasmic; it reads HQESTLAIRA…LLRDTSHRFG (95 aa).

The protein belongs to the MzrA family. As to quaternary structure, interacts with EnvZ.

The protein resides in the cell inner membrane. Modulates the activity of the EnvZ/OmpR two-component regulatory system, probably by directly modulating EnvZ enzymatic activity and increasing stability of phosphorylated OmpR. The polypeptide is Modulator protein MzrA (Escherichia fergusonii (strain ATCC 35469 / DSM 13698 / CCUG 18766 / IAM 14443 / JCM 21226 / LMG 7866 / NBRC 102419 / NCTC 12128 / CDC 0568-73)).